The sequence spans 377 residues: Nitric oxide reductase FlRd-NAD(+) reductase (377 aa).

Belongs to the FAD-dependent oxidoreductase family. FAD is required as a cofactor.

It localises to the cytoplasm. It catalyses the reaction 2 reduced [nitric oxide reductase rubredoxin domain] + NAD(+) + H(+) = 2 oxidized [nitric oxide reductase rubredoxin domain] + NADH. It participates in nitrogen metabolism; nitric oxide reduction. One of at least two accessory proteins for anaerobic nitric oxide (NO) reductase. Reduces the rubredoxin moiety of NO reductase. This chain is Nitric oxide reductase FlRd-NAD(+) reductase, found in Salmonella arizonae (strain ATCC BAA-731 / CDC346-86 / RSK2980).